We begin with the raw amino-acid sequence, 148 residues long: Snaclec 3 (148 aa).

The first 23 residues, 1-23, serve as a signal peptide directing secretion; that stretch reads MGRFISVSFGLLVVFLSLSGTEA. 3 disulfides stabilise this stretch: C27-C38, C55-C144, and C121-C136. A C-type lectin domain is found at 34–145; it reads YDQNCYKVFT…CSSTHNFVCK (112 aa).

Belongs to the snaclec family. Heterodimer; disulfide-linked.

The protein resides in the secreted. In terms of biological role, interferes with one step of hemostasis (modulation of platelet aggregation, or coagulation cascade, for example). The chain is Snaclec 3 from Daboia siamensis (Eastern Russel's viper).